A 229-amino-acid chain; its full sequence is Small ribosomal subunit protein uS3c (229 aa).

The KH type-2 domain occupies 39–128 (LRDNLFKQYP…RIILTILKVQ (90 aa)).

It belongs to the universal ribosomal protein uS3 family. In terms of assembly, part of the 30S ribosomal subunit.

It is found in the plastid. Its subcellular location is the chloroplast. The sequence is that of Small ribosomal subunit protein uS3c (rps3) from Tupiella akineta (Green alga).